Here is a 486-residue protein sequence, read N- to C-terminus: MKSLDDLDFDNRFARLGDAFSTEVLPDPIAEPRLVVASPAALALLDLPAETSDEALFAELFGGHKLWSEAEPRAMVYSGHQFGSYNPRLGDGRGLLLGEVINQAGEHWDLHLKGAGQTPYSRMGDGRAVLRSSIREFLASEALPALGIPSSRALCVIGSSTPVWREKKESAATLLRLAPSHVRFGHFEYFYYTRQHDQLKQLAAFVQEHHFADCNAAERPYAAMFRQVVERNAELIARWQAYGFCHGVMNTDNMSILGITFDYGPYAFLDDFDANHICNHSDDAGRYSFSNQVPIAHWNLAALAQALTPLVEVDELRASLDLFLPLYQAHYLDLMRRRLGLGVAAENDQALVQELLQRMQGSAVDYSLFFRRLGEETPERALASLRDDFVDREAFDRWAEAYRRRVEEEGGDQESRRRRMHAVNPLYVLRNYLAQQAIEAAEQGDYTEVRLLHQVLSRPFEEQPGMERFTRRPPDWGRHLEISCSS.

ATP contacts are provided by G90, G92, R93, K113, D125, G126, R176, and R183. Catalysis depends on D252, which acts as the Proton acceptor. Positions 253 and 262 each coordinate Mg(2+). D262 lines the ATP pocket.

The protein belongs to the SELO family. The cofactor is Mg(2+). Requires Mn(2+) as cofactor.

It carries out the reaction L-seryl-[protein] + ATP = 3-O-(5'-adenylyl)-L-seryl-[protein] + diphosphate. It catalyses the reaction L-threonyl-[protein] + ATP = 3-O-(5'-adenylyl)-L-threonyl-[protein] + diphosphate. The enzyme catalyses L-tyrosyl-[protein] + ATP = O-(5'-adenylyl)-L-tyrosyl-[protein] + diphosphate. The catalysed reaction is L-histidyl-[protein] + UTP = N(tele)-(5'-uridylyl)-L-histidyl-[protein] + diphosphate. It carries out the reaction L-seryl-[protein] + UTP = O-(5'-uridylyl)-L-seryl-[protein] + diphosphate. It catalyses the reaction L-tyrosyl-[protein] + UTP = O-(5'-uridylyl)-L-tyrosyl-[protein] + diphosphate. Its function is as follows. Nucleotidyltransferase involved in the post-translational modification of proteins. It can catalyze the addition of adenosine monophosphate (AMP) or uridine monophosphate (UMP) to a protein, resulting in modifications known as AMPylation and UMPylation. The chain is Protein nucleotidyltransferase YdiU from Pseudomonas aeruginosa (strain UCBPP-PA14).